Reading from the N-terminus, the 935-residue chain is Isoleucine--tRNA ligase (935 aa).

The short motif at 58–68 (PYANGSIHVGH) is the 'HIGH' region element. Glu-558 lines the L-isoleucyl-5'-AMP pocket. Residues 599 to 603 (KMSKS) carry the 'KMSKS' region motif. Lys-602 serves as a coordination point for ATP. Residues Cys-897, Cys-900, Cys-917, and Cys-920 each coordinate Zn(2+).

This sequence belongs to the class-I aminoacyl-tRNA synthetase family. IleS type 1 subfamily. In terms of assembly, monomer. The cofactor is Zn(2+).

It is found in the cytoplasm. It catalyses the reaction tRNA(Ile) + L-isoleucine + ATP = L-isoleucyl-tRNA(Ile) + AMP + diphosphate. Functionally, catalyzes the attachment of isoleucine to tRNA(Ile). As IleRS can inadvertently accommodate and process structurally similar amino acids such as valine, to avoid such errors it has two additional distinct tRNA(Ile)-dependent editing activities. One activity is designated as 'pretransfer' editing and involves the hydrolysis of activated Val-AMP. The other activity is designated 'posttransfer' editing and involves deacylation of mischarged Val-tRNA(Ile). The protein is Isoleucine--tRNA ligase of Francisella tularensis subsp. mediasiatica (strain FSC147).